We begin with the raw amino-acid sequence, 192 residues long: Elongation factor P (192 aa).

A disordered region spans residues 133–157; that stretch reads EVTETTPGVKGDTAQGGDKPATLES.

It belongs to the elongation factor P family.

The protein resides in the cytoplasm. It functions in the pathway protein biosynthesis; polypeptide chain elongation. Its function is as follows. Involved in peptide bond synthesis. Stimulates efficient translation and peptide-bond synthesis on native or reconstituted 70S ribosomes in vitro. Probably functions indirectly by altering the affinity of the ribosome for aminoacyl-tRNA, thus increasing their reactivity as acceptors for peptidyl transferase. The sequence is that of Elongation factor P from Salinibacter ruber (strain DSM 13855 / M31).